Consider the following 287-residue polypeptide: Urease accessory protein UreD (287 aa).

This sequence belongs to the UreD family. In terms of assembly, ureD, UreF and UreG form a complex that acts as a GTP-hydrolysis-dependent molecular chaperone, activating the urease apoprotein by helping to assemble the nickel containing metallocenter of UreC. The UreE protein probably delivers the nickel.

Its subcellular location is the cytoplasm. In terms of biological role, required for maturation of urease via the functional incorporation of the urease nickel metallocenter. The protein is Urease accessory protein UreD of Herpetosiphon aurantiacus (strain ATCC 23779 / DSM 785 / 114-95).